Reading from the N-terminus, the 1436-residue chain is DNA polymerase III PolC-type (1436 aa).

The Exonuclease domain occupies 420–576 (YVVFDVETTG…YDTEATAYIF (157 aa)).

It belongs to the DNA polymerase type-C family. PolC subfamily.

The protein resides in the cytoplasm. The catalysed reaction is DNA(n) + a 2'-deoxyribonucleoside 5'-triphosphate = DNA(n+1) + diphosphate. Required for replicative DNA synthesis. This DNA polymerase also exhibits 3' to 5' exonuclease activity. The protein is DNA polymerase III PolC-type of Staphylococcus aureus (strain MW2).